Consider the following 410-residue polypeptide: Sensor-like histidine kinase SenX3 (410 aa).

2 helical membrane passes run 6-26 and 46-66; these read ALLLAGVLSALALAVGGAVGM and ITVSQMLQCIVTLMPLGAAVV. In terms of domain architecture, Histidine kinase spans 164–380; the sequence is NVSHELKTPV…TFTLALPALI (217 aa). Position 167 is a phosphohistidine; by autocatalysis (His167). The segment at 385–410 is disordered; that stretch reads DDERPEQAREPELRSNRSQREEELSR.

Post-translationally, autophosphorylated.

Its subcellular location is the cell membrane. The enzyme catalyses ATP + protein L-histidine = ADP + protein N-phospho-L-histidine.. In terms of biological role, member of the two-component regulatory system SenX3/RegX3. Autophosphorylates, and then transfers the phosphate group to RegX3. The protein is Sensor-like histidine kinase SenX3 of Mycobacterium bovis (strain ATCC BAA-935 / AF2122/97).